Here is a 409-residue protein sequence, read N- to C-terminus: Serine/threonine transporter SstT (409 aa).

Transmembrane regions (helical) follow at residues 17–37 (LVGQ…FFPA), 49–69 (FVSA…MASI), 83–103 (ILLL…IASF), 142–162 (ALIS…GIAF), 180–200 (VSLI…GLVA), 218–238 (LVVL…LIVF), 301–321 (GAAI…GIAV), 331–351 (VVAS…LLLI), and 357–377 (LFGI…IIAI).

It belongs to the dicarboxylate/amino acid:cation symporter (DAACS) (TC 2.A.23) family.

The protein resides in the cell inner membrane. It carries out the reaction L-serine(in) + Na(+)(in) = L-serine(out) + Na(+)(out). The catalysed reaction is L-threonine(in) + Na(+)(in) = L-threonine(out) + Na(+)(out). Functionally, involved in the import of serine and threonine into the cell, with the concomitant import of sodium (symport system). The protein is Serine/threonine transporter SstT of Pseudomonas aeruginosa (strain LESB58).